A 206-amino-acid polypeptide reads, in one-letter code: Ion-translocating oxidoreductase complex subunit G (206 aa).

A helical transmembrane segment spans residues 9–29 (GITLALFAAGSTGLTAVINQM). FMN phosphoryl threonine is present on T174.

The protein belongs to the RnfG family. The complex is composed of six subunits: RsxA, RsxB, RsxC, RsxD, RsxE and RsxG. FMN serves as cofactor.

It localises to the cell inner membrane. Part of a membrane-bound complex that couples electron transfer with translocation of ions across the membrane. Required to maintain the reduced state of SoxR. The polypeptide is Ion-translocating oxidoreductase complex subunit G (Salmonella typhi).